The following is a 64-amino-acid chain: MAKAKGARIIITLECTECRTNVNKRSPGVNRYTTTKNRRNTTARLELKKFCPHCNRHTVHKEIK.

The protein belongs to the bacterial ribosomal protein bL33 family.

This chain is Large ribosomal subunit protein bL33, found in Synechococcus sp. (strain JA-2-3B'a(2-13)) (Cyanobacteria bacterium Yellowstone B-Prime).